The primary structure comprises 360 residues: Threonine synthase (360 aa).

Lys69 is subject to N6-(pyridoxal phosphate)lysine. Pyridoxal 5'-phosphate is bound by residues Asn95, 196 to 200, and Thr326; that span reads GNAGN.

This sequence belongs to the threonine synthase family. In terms of assembly, homodimer. Requires pyridoxal 5'-phosphate as cofactor.

It catalyses the reaction O-phospho-L-homoserine + H2O = L-threonine + phosphate. It participates in amino-acid biosynthesis; L-threonine biosynthesis; L-threonine from L-aspartate: step 5/5. In terms of biological role, catalyzes the gamma-elimination of phosphate from L-phosphohomoserine and the beta-addition of water to produce L-threonine. This is Threonine synthase (thrC) from Mycobacterium leprae (strain TN).